The sequence spans 437 residues: Transcription factor E2F1 (437 aa).

2 disordered regions span residues 42–87 (ASAP…GRPP) and 101–128 (LAESSGPARGRGRHPGKGVKSPGEKSRY). A cyclin A:CDK2 binding region spans residues 67-108 (ATPQAPRPTPSAPRPALGRPPVKRRLDLETDHQYLAESSGPA). The tract at residues 89-191 (KRRLDLETDH…KKSKNHIQWL (103 aa)) is interaction with BIRC2/c-IAP1. The DNA-binding element occupies 110–194 (GRGRHPGKGV…KNHIQWLGSH (85 aa)). N6-acetyllysine occurs at positions 117, 120, and 125. The leucine-zipper stretch occupies residues 153-174 (LNWAAEVLKVQKRRIYDITNVL). A DEF box motif is present at residues 158-194 (EVLKVQKRRIYDITNVLEGIQLIAKKSKNHIQWLGSH). Lysine 185 carries the post-translational modification N6-methyllysine; by SETD7. The segment at 192–382 (GSHTTVGVGG…RLSPLVAADS (191 aa)) is required for interaction with TRIM28. The tract at residues 195-284 (TTVGVGGRLE…AVDSSENFQI (90 aa)) is dimerization. Positions 300 to 349 (EETVGGISPGKTPSQEVTSEEENRATDSATIVSPPPSSPPSSLTTDPSQS) are disordered. Residues 339 to 349 (PSSLTTDPSQS) are compositionally biased toward low complexity. The residue at position 364 (serine 364) is a Phosphoserine; by CHEK2. Residues 368 to 437 (PVDEDRLSPL…DFGDLTPLDF (70 aa)) form a transactivation region. At serine 375 the chain carries Phosphoserine. Position 403 is a phosphoserine; by GSK3-beta (serine 403). The segment at 409–426 (LDYHFGLEEGEGIRDLFD) is RB1 binding. Threonine 433 is modified (phosphothreonine; by GSK3-beta).

This sequence belongs to the E2F/DP family. In terms of assembly, component of the DRTF1/E2F transcription factor complex. Forms heterodimers with DP family members. The E2F1 complex binds specifically hypophosphorylated RB1, the interaction represses E2F1-driven transcription. During the cell cycle, RB1 becomes phosphorylated in mid-to-late G1 phase, detaches from the DRTF1/E2F complex, rendering E2F transcriptionally active. Viral oncoproteins, notably E1A, T-antigen and HPV E7, are capable of sequestering RB1, thus releasing the active complex. Interacts with TRRAP, which probably mediates its interaction with histone acetyltransferase complexes, leading to transcription activation. Binds TOPBP1 and EAPP. Interacts with ARID3A. Interacts with TRIM28; the interaction inhibits E2F1 acetylation through recruiting HDAC1 and represses its transcriptional activity. Interaction with KAT2B; the interaction acetylates E2F1 enhancing its DNA-binding and transcriptional activity. Interacts with BIRC2/c-IAP1 (via BIR domains). The complex TFDP1:E2F1 interacts with CEBPA; the interaction prevents CEBPA binding to target genes promoters and represses its transcriptional activity. Interacts with RRP1B. Interacts with HCFC1. Interacts with KMT2E; the interaction is probably indirect and is mediated via HCFC1. Interacts with DCAF5 and L3MBTL3; the interaction requires methylation at Lys-185 and is necessary to target E2F1 for ubiquitination by the CRL4-DCAF5 E3 ubiquitin ligase complex. (Microbial infection) Interacts with human cytomegalovirus/HHV-5 protein UL123. Post-translationally, phosphorylated by CDK2 and cyclin A-CDK2 in the S-phase. Phosphorylation at Ser-364 by CHEK2 stabilizes E2F1 upon DNA damage and regulates its effect on transcription and apoptosis. Phosphorylation at Ser-403 by GSK3B promotes interaction with USP11, leading to its deubiquitination and stabilization. Ubiquitinated via 'Lys-63'-linked ubiquitin, leading to its degradation. Deubiquitinated by USP11 following phosphorylation by GSK3B, promoting its stability. In terms of processing, acetylation stimulates DNA-binding. Enhanced under stress conditions such as DNA damage and inhibited by retinoblastoma protein RB1. Regulated by KAP1/TRIM28 which recruits HDAC1 to E2F1 resulting in deacetylation. Acetylated by P/CAF/KAT2B. Post-translationally, methylation at Lys-185 by SETD7 promotes E2F1 ubiquitin-dependent proteasomal degradation.

It localises to the nucleus. With respect to regulation, BIRC2/c-IAP1 stimulates its transcriptional activity. Its function is as follows. Transcription activator that binds DNA cooperatively with DP proteins through the E2 recognition site, 5'-TTTC[CG]CGC-3' found in the promoter region of a number of genes whose products are involved in cell cycle regulation or in DNA replication. The DRTF1/E2F complex functions in the control of cell-cycle progression from G1 to S phase. E2F1 binds preferentially RB1 in a cell-cycle dependent manner. It can mediate both cell proliferation and TP53/p53-dependent apoptosis. Blocks adipocyte differentiation by binding to specific promoters repressing CEBPA binding to its target gene promoters. Directly activates transcription of PEG10. Positively regulates transcription of RRP1B. The chain is Transcription factor E2F1 from Homo sapiens (Human).